Here is a 447-residue protein sequence, read N- to C-terminus: ATP-dependent protease ATPase subunit HslU (447 aa).

Residues Ile-18, 60–65 (GVGKTE), Asp-259, Glu-325, and Arg-397 contribute to the ATP site.

Belongs to the ClpX chaperone family. HslU subfamily. In terms of assembly, a double ring-shaped homohexamer of HslV is capped on each side by a ring-shaped HslU homohexamer. The assembly of the HslU/HslV complex is dependent on binding of ATP.

The protein resides in the cytoplasm. Functionally, ATPase subunit of a proteasome-like degradation complex; this subunit has chaperone activity. The binding of ATP and its subsequent hydrolysis by HslU are essential for unfolding of protein substrates subsequently hydrolyzed by HslV. HslU recognizes the N-terminal part of its protein substrates and unfolds these before they are guided to HslV for hydrolysis. The sequence is that of ATP-dependent protease ATPase subunit HslU from Burkholderia lata (strain ATCC 17760 / DSM 23089 / LMG 22485 / NCIMB 9086 / R18194 / 383).